Consider the following 144-residue polypeptide: Probable nucleoside diphosphate kinase 5 (144 aa).

Residues lysine 3, phenylalanine 51, arginine 79, threonine 85, arginine 99, and asparagine 109 each contribute to the ATP site. The active-site Pros-phosphohistidine intermediate is the histidine 112.

This sequence belongs to the NDK family.

It catalyses the reaction a 2'-deoxyribonucleoside 5'-diphosphate + ATP = a 2'-deoxyribonucleoside 5'-triphosphate + ADP. The enzyme catalyses a ribonucleoside 5'-diphosphate + ATP = a ribonucleoside 5'-triphosphate + ADP. In terms of biological role, involved in the synthesis of nucleoside triphosphates other than ATP. The ATP gamma phosphate is transferred to the NDP beta phosphate via a ping-pong mechanism, using a phosphorylated active-site intermediate. This Arabidopsis thaliana (Mouse-ear cress) protein is Probable nucleoside diphosphate kinase 5.